We begin with the raw amino-acid sequence, 317 residues long: Universal stress protein MT2052 (317 aa).

Residues Gly13, 128–134 (GYRGQGA), 142–143 (SV), Gly175, Asp208, 277–283 (GSHGRGG), and 291–293 (SVS) each bind ATP.

The protein belongs to the universal stress protein A family.

This Mycobacterium tuberculosis (strain CDC 1551 / Oshkosh) protein is Universal stress protein MT2052.